A 142-amino-acid chain; its full sequence is MADQVPVTTQLPPIKPEHEVPLDAGGSPVGNMGTNSNNNNELGDVFDRIKTHFPPAKVKKIMQTDEDIGKVSQATPVIAGRSLEFFIALLVKKSGEMARGQGTKRITAEILKKTILNDEKFDFLREGLCVEEGQTQPEEESA.

Over residues 1 to 11 (MADQVPVTTQL) the composition is skewed to polar residues. A disordered region spans residues 1-43 (MADQVPVTTQLPPIKPEHEVPLDAGGSPVGNMGTNSNNNNELG). A Phosphoserine modification is found at serine 27. One can recognise a Histone-fold domain in the interval 29 to 137 (VGNMGTNSNN…LCVEEGQTQP (109 aa)). Position 141 is a phosphoserine (serine 141).

This sequence belongs to the NC2 alpha/DRAP1 family. As to quaternary structure, component of the NC2 (negative cofactor 2) complex composed of BUR6 and NCB2. The NC2 complex associates with SPT15/TBP. Interacts with SPT15/TBP.

It is found in the nucleus. Component of the NC2 complex which represses RNA polymerase II transcription through binding to SPT15/TBP and thereby inhibiting the assembly of the preinitiation complex. The NC2 complex may also mediate transcriptional activation from TATA-driven promoters through association with SPT15/TBP. In Saccharomyces cerevisiae (strain ATCC 204508 / S288c) (Baker's yeast), this protein is Negative cofactor 2 complex subunit alpha (BUR6).